Here is an 828-residue protein sequence, read N- to C-terminus: MEKTYNPQEIERKWQRNWQEKDAFKVSNEEYHKKYYDLVMFPYPSGTLHVGHVKNYVIGDVIARYKRMRGYNVMHPFGFDAFGLPAENAAIEKGNIHPEDWTMQNINIIRNQIKKLGISYNWEREVITCKEDYYKWTQWIFLQLYKNGLAYKKKAPVNWCPNCKTVLANEQVVNGKCERCGTVVEIKQLEQWYFKITDYAEKLLYDLEKLSGWPENVKIMQKNWIGKSVGAEVEFNLDNGKGSLRVFTTRPDTLWGVTFMALAPESPLVEELTTPENSEKVNQFLQRVSLQDRFKRTAEGAEKEGVFTGSYAINPVNGEKIPIYVANYILYEYGTGAIMAVPAHDQRDFEFAKKYDLPIRIVIMPEGDELTEENLEKAYIGEGVLVNSGEFTGLDNQTAIREVSQWLEDKKIGKVVTQYKLRDWLISRQRYWGAPIPVVYCEKCGVVPVPEKDLPVKLPRDVAFEPTGKSPLIDHPDFKETTCPKCGGKAKREVDTMDTFVDSSWYYLRYVNPKLEDKPFNKEDVDNWLPVDQYIGGVEHAILHLLYSRFITKVLKDLGYVSFDEPFKNLFTQGMIYRNGAKMSKSKGNVVSPEEMIEKYGTDALRTYILFMAPPERDAEWNDSGIEGTYRFLNKVWNTYMKIQDKIIHLENKPNYPLKNKSEKDLRRKLHQTIEKITSDIEGNFQFNTAVSSLMELLNELNSYLNNTDDKDWNLNLLKEFSEDFVLMLSPIAPHISEELWKNFGKDEFIFKASWPEIDKNALKAEEITLAVQINGKLRAQITVDVSLNEDEVKSYALEDDKVQKYISGKKIQKIIYVPKKIINIVVK.

Residues 42–52 carry the 'HIGH' region motif; that stretch reads PYPSGTLHVGH. The short motif at 582-586 is the 'KMSKS' region element; that stretch reads KMSKS. Lys585 contacts ATP.

This sequence belongs to the class-I aminoacyl-tRNA synthetase family.

Its subcellular location is the cytoplasm. It catalyses the reaction tRNA(Leu) + L-leucine + ATP = L-leucyl-tRNA(Leu) + AMP + diphosphate. The sequence is that of Leucine--tRNA ligase from Petrotoga mobilis (strain DSM 10674 / SJ95).